A 151-amino-acid chain; its full sequence is Major curlin subunit (151 aa).

A signal peptide spans 1 to 20 (MKLLKVAAIAAIVFSGSALA). The disordered stretch occupies residues 71–90 (TQHGGGNGADVGQGSDDSSI).

The protein belongs to the CsgA/CsgB family.

Its subcellular location is the fimbrium. In terms of biological role, curlin is the structural subunit of the curli fimbriae. Curli are coiled surface structures that assemble preferentially at growth temperatures below 37 degrees Celsius. Curli can bind to fibronectin. In Escherichia coli (strain K12), this protein is Major curlin subunit (csgA).